A 266-amino-acid chain; its full sequence is Indole-3-glycerol phosphate synthase (266 aa).

This sequence belongs to the TrpC family.

It catalyses the reaction 1-(2-carboxyphenylamino)-1-deoxy-D-ribulose 5-phosphate + H(+) = (1S,2R)-1-C-(indol-3-yl)glycerol 3-phosphate + CO2 + H2O. It participates in amino-acid biosynthesis; L-tryptophan biosynthesis; L-tryptophan from chorismate: step 4/5. The chain is Indole-3-glycerol phosphate synthase from Variovorax paradoxus (strain S110).